Consider the following 60-residue polypeptide: Large ribosomal subunit protein bL32 (60 aa).

The segment at 1 to 60 (MAVQQNKKSRSARDMRRSHDALEPNALSVEKSTGEVHLRHHVSPDGFYRGRKVIDKGADE) is disordered. A compositionally biased stretch (basic and acidic residues) spans 11 to 22 (SARDMRRSHDAL).

This sequence belongs to the bacterial ribosomal protein bL32 family.

This Stutzerimonas stutzeri (strain A1501) (Pseudomonas stutzeri) protein is Large ribosomal subunit protein bL32.